Reading from the N-terminus, the 539-residue chain is Protein mushroom body miniature (539 aa).

Positions 1–11 (MHNSGGQSGWN) are enriched in polar residues. Positions 1-345 (MHNSGGQSGW…EDDKKARKQK (345 aa)) are disordered. A compositionally biased stretch (basic and acidic residues) spans 67 to 79 (KFRDPQQELDNHQ). Residues 80–89 (PNKRGGRRNR) show a composition bias toward basic residues. The span at 90 to 101 (GGGGGGGGWGGR) shows a compositional bias: gly residues. The span at 199–208 (IKKEKEMEHK) shows a compositional bias: basic and acidic residues. Positions 268–289 (VASTPKPKAVKPVSSSDSSTSD) are enriched in low complexity. Ser-288 and Ser-290 each carry phosphoserine. Thr-292 and Thr-327 each carry phosphothreonine. Residues 327–336 (TDEEESTEPE) show a composition bias toward acidic residues. Ser-332 is modified (phosphoserine). Thr-333 carries the phosphothreonine modification. 2 CCHC-type zinc fingers span residues 354 to 367 (CGIC…SFQC) and 371 to 386 (CRNC…NCPN). The interval 421 to 513 (VTAPVSAKPK…AASLPPQVFP (93 aa)) is disordered. A compositionally biased stretch (basic residues) spans 428 to 447 (KPKKDKKASIKKIKKSSQKR). Acidic residues predominate over residues 456–480 (DEEDDEEDDDEDEDDSSESDDSESS).

Post-translationally, may be phosphorylated in vivo by CkIIalpha. mbm and CkIIalpha colocalize to the nucleolus and mbm is phosphorylated in vitro by CkIIalpha. Shows widespread expression in third instar larval brain with no apparent difference between males and females (at protein level). Detected at low levels in the mushroom body neuropil and is also expressed in many cells of the brain outside the mushroom body (at protein level). Not detected in third instar larval brain cells in anaphase (at protein level).

The protein resides in the nucleus. It is found in the nucleolus. It localises to the cytoplasm. Its function is as follows. Required for small ribosomal subunit biogenesis in neuroblasts. Plays a role in mushroom body development. The sequence is that of Protein mushroom body miniature from Drosophila melanogaster (Fruit fly).